The primary structure comprises 195 residues: Protein GrpE (195 aa).

This sequence belongs to the GrpE family. In terms of assembly, homodimer.

It is found in the cytoplasm. Functionally, participates actively in the response to hyperosmotic and heat shock by preventing the aggregation of stress-denatured proteins, in association with DnaK and GrpE. It is the nucleotide exchange factor for DnaK and may function as a thermosensor. Unfolded proteins bind initially to DnaJ; upon interaction with the DnaJ-bound protein, DnaK hydrolyzes its bound ATP, resulting in the formation of a stable complex. GrpE releases ADP from DnaK; ATP binding to DnaK triggers the release of the substrate protein, thus completing the reaction cycle. Several rounds of ATP-dependent interactions between DnaJ, DnaK and GrpE are required for fully efficient folding. This chain is Protein GrpE, found in Blochmanniella pennsylvanica (strain BPEN).